A 282-amino-acid chain; its full sequence is Shikimate dehydrogenase (NADP(+)) (282 aa).

Shikimate contacts are provided by residues 18-20 and Thr65; that span reads SRS. Lys69 (proton acceptor) is an active-site residue. Glu81 is a binding site for NADP(+). Shikimate-binding residues include Asn90 and Asp105. Residues 130-134, 154-159, and Met222 contribute to the NADP(+) site; these read GAGGA and NRTPAR. Tyr224 contributes to the shikimate binding site. Gly245 is an NADP(+) binding site.

Belongs to the shikimate dehydrogenase family. In terms of assembly, homodimer.

The enzyme catalyses shikimate + NADP(+) = 3-dehydroshikimate + NADPH + H(+). It functions in the pathway metabolic intermediate biosynthesis; chorismate biosynthesis; chorismate from D-erythrose 4-phosphate and phosphoenolpyruvate: step 4/7. Its function is as follows. Involved in the biosynthesis of the chorismate, which leads to the biosynthesis of aromatic amino acids. Catalyzes the reversible NADPH linked reduction of 3-dehydroshikimate (DHSA) to yield shikimate (SA). The protein is Shikimate dehydrogenase (NADP(+)) of Acidovorax sp. (strain JS42).